The following is a 164-amino-acid chain: Phosphopantetheine adenylyltransferase (164 aa).

Serine 9 is a binding site for substrate. Residues 9–10 and histidine 17 each bind ATP; that span reads SF. Substrate-binding residues include lysine 41, leucine 73, and lysine 87. ATP-binding positions include 88 to 90, glutamate 98, and 123 to 129; these read GLR and HSFLSSS.

Belongs to the bacterial CoaD family. In terms of assembly, homohexamer. The cofactor is Mg(2+).

The protein localises to the cytoplasm. It catalyses the reaction (R)-4'-phosphopantetheine + ATP + H(+) = 3'-dephospho-CoA + diphosphate. The protein operates within cofactor biosynthesis; coenzyme A biosynthesis; CoA from (R)-pantothenate: step 4/5. Its function is as follows. Reversibly transfers an adenylyl group from ATP to 4'-phosphopantetheine, yielding dephospho-CoA (dPCoA) and pyrophosphate. The sequence is that of Phosphopantetheine adenylyltransferase from Rubrobacter xylanophilus (strain DSM 9941 / JCM 11954 / NBRC 16129 / PRD-1).